The sequence spans 130 residues: Small ribosomal subunit protein uS11c (130 aa).

Belongs to the universal ribosomal protein uS11 family. In terms of assembly, part of the 30S ribosomal subunit.

Its subcellular location is the plastid. It is found in the cyanelle. The chain is Small ribosomal subunit protein uS11c from Cyanophora paradoxa.